A 674-amino-acid chain; its full sequence is Carcinine transporter (674 aa).

Residues 1-53 lie on the Cytoplasmic side of the membrane; sequence MSDIEDNDGDEYDELSELRQRHKPESQPSVDEAFDLDDLLPTIGEFGKYQKLL. Residues 54-74 traverse the membrane as a helical segment; sequence VFGICLPACIPCGFCAFNQLF. At 75 to 178 the chain is on the extracellular side; sequence MADTPDDYWC…DLVCDQDIYP (104 aa). Residues Asn122, Asn141, and Asn156 are each glycosylated (N-linked (GlcNAc...) asparagine). Residues 179-199 traverse the membrane as a helical segment; it reads TIGLAALNTGGPVGVYLFGLL. Topologically, residues 200–206 are cytoplasmic; the sequence is NDRGGRR. A helical membrane pass occupies residues 207–227; that stretch reads LSYFVCLATLLAGSLMTSLSK. At 228–236 the chain is on the extracellular side; the sequence is DFWTWAGSR. A helical transmembrane segment spans residues 237–257; the sequence is VIVGLTIPAVYQIPFIISLEL. At 258-264 the chain is on the cytoplasmic side; that stretch reads VGENYRS. A helical transmembrane segment spans residues 265–285; the sequence is FVTVMTCTFYTSGIMLLSGVT. The Extracellular portion of the chain corresponds to 286-293; the sequence is YLERDWVR. The chain crosses the membrane as a helical span at residues 294 to 314; that stretch reads LSYITSLPFYAYFLYMFVMPE. Topologically, residues 315–385 are cytoplasmic; it reads SPRWLLMRGR…CRTPNMRLKT (71 aa). A helical membrane pass occupies residues 386 to 406; it reads ILITLSWFANETVYLGLSYYG. The Extracellular segment spans residues 407-414; it reads PALGTNQY. A helical membrane pass occupies residues 415-435; sequence VSFFLSAVVELPSYLCCWYFM. Residues 436–441 are Cytoplasmic-facing; the sequence is DTWGRR. A helical transmembrane segment spans residues 442-462; sequence WPLSLSMILGGVACVITVMLP. Over 463–469 the chain is Extracellular; that stretch reads DDAVDET. A helical membrane pass occupies residues 470 to 490; sequence LVLYLVSKALLSASFLIIYPF. Over 491–500 the chain is Cytoplasmic; the sequence is AGELYPTQVR. The chain crosses the membrane as a helical span at residues 501 to 521; the sequence is GIGIGASSYIGGLGLIGIPFI. The Extracellular segment spans residues 522-527; it reads TYLGKD. A helical transmembrane segment spans residues 528-548; it reads NLKLPLVIMGFLSMLGGMTGL. Over 549-674 the chain is Cytoplasmic; it reads RLPETLHHRL…DGTMQLTHWI (126 aa). Over residues 614 to 631 the composition is skewed to basic and acidic residues; the sequence is RDSRRVREPAPRIDERTP. A disordered region spans residues 614-647; sequence RDSRRVREPAPRIDERTPLDTTASGSGRPVHRPS.

Belongs to the major facilitator (TC 2.A.1) superfamily. Organic cation transporter (TC 2.A.1.19) family. As to expression, expressed in photoreceptor cells.

It localises to the cell membrane. The protein resides in the cell projection. It is found in the axon. Its function is as follows. Carcinine transporter which is required for recycling of the neurotransmitter histamine in photoreceptor neurons of the compound eye. Following histamine release from photoreceptors and its uptake by glia where it is converted to carcinine, required for the uptake of carcinine from glia into photoreceptor cells where it can be hydrolyzed by tan to form histamine and beta-alanine. This is Carcinine transporter from Drosophila melanogaster (Fruit fly).